The chain runs to 551 residues: uncharacterized protein (551 aa).

Topologically, residues 1 to 7 are cytoplasmic; sequence MKKNSSV. The chain crosses the membrane as a helical span at residues 8-28; it reads VFFLVGLSQFVTMAFLIIGSI. The Vacuolar segment spans residues 29–88; the sequence is TAPIFKQIGYSKYDEITYGTFGYCKEGSCSKASYNYHPDELSDSDSNWKLNSNARSILGK. The chain crosses the membrane as a helical span at residues 89-109; sequence IIFITPIAAGLNFLGFLCTIM. Topologically, residues 110-135 are cytoplasmic; the sequence is SVLLINVLSSDRVGSASAIMFFVNLT. The chain crosses the membrane as a helical span at residues 136–156; it reads FSTLGFLSASLICIVVFLLFY. The Vacuolar portion of the chain corresponds to 157-160; sequence PHVT. The helical transmembrane segment at 161–181 threads the bilayer; that stretch reads WCSWVLIPGAALSLLVIPLIF. The Cytoplasmic segment spans residues 182–551; sequence SAYSRSSGSR…TSLNNPYGFR (370 aa). 2 positions are modified to phosphoserine: S224 and S232. A disordered region spans residues 280-341; sequence AKDMENSNGS…NGSNTSNNIN (62 aa). Residues 307-320 show a composition bias toward polar residues; that stretch reads TSTYSVIESESGLK. The segment covering 321 to 341 has biased composition (low complexity); the sequence is NGSVSNNYVRNNGSNTSNNIN. S363 bears the Phosphoserine mark.

In terms of assembly, forms homo dimers or homooligomers in MCC microdomains. Interacts with BOI2 and RHO3, two key regulators of secretion.

Its subcellular location is the vacuole membrane. The protein localises to the cell membrane. Protein involved in secretion and cell wall organization. Contributes to cell surface-related functions as a auxiliary component of MCC/eisosome that specifically interacts with the secretory pathway. This is an uncharacterized protein from Saccharomyces cerevisiae (strain ATCC 204508 / S288c) (Baker's yeast).